A 162-amino-acid polypeptide reads, in one-letter code: NADH-quinone oxidoreductase subunit I 2 (162 aa).

4Fe-4S ferredoxin-type domains are found at residues 53–83 and 93–122; these read LRRY…IESE and TRYD…ETRI. Positions 63, 66, 69, 73, 102, 105, 108, and 112 each coordinate [4Fe-4S] cluster.

The protein belongs to the complex I 23 kDa subunit family. NDH-1 is composed of 14 different subunits. Subunits NuoA, H, J, K, L, M, N constitute the membrane sector of the complex. [4Fe-4S] cluster is required as a cofactor.

It is found in the cell inner membrane. It carries out the reaction a quinone + NADH + 5 H(+)(in) = a quinol + NAD(+) + 4 H(+)(out). In terms of biological role, NDH-1 shuttles electrons from NADH, via FMN and iron-sulfur (Fe-S) centers, to quinones in the respiratory chain. The immediate electron acceptor for the enzyme in this species is believed to be ubiquinone. Couples the redox reaction to proton translocation (for every two electrons transferred, four hydrogen ions are translocated across the cytoplasmic membrane), and thus conserves the redox energy in a proton gradient. The sequence is that of NADH-quinone oxidoreductase subunit I 2 from Nitrosospira multiformis (strain ATCC 25196 / NCIMB 11849 / C 71).